We begin with the raw amino-acid sequence, 77 residues long: UPF0401 protein c0279 (77 aa).

Belongs to the UPF0401 family.

This is UPF0401 protein c0279 from Escherichia coli O6:H1 (strain CFT073 / ATCC 700928 / UPEC).